The primary structure comprises 193 residues: Ion-translocating oxidoreductase complex subunit B (193 aa).

A hydrophobic region spans residues 1 to 26 (MSTMLIAVILLTLLALFFGVLLGFAA). Positions 32 to 90 (EGNPIVDELEAILPQTQCGQCGYPGCRPYAEAIANGDKVNKCPPGGTATMEKLANLMGV) constitute a 4Fe-4S domain. Residues Cys49, Cys52, Cys57, Cys73, Cys114, Cys117, Cys120, Cys124, Cys144, Cys147, Cys150, and Cys154 each coordinate [4Fe-4S] cluster. 4Fe-4S ferredoxin-type domains are found at residues 105–134 (KVAY…GAGK) and 136–164 (MHTV…MIPV).

It belongs to the 4Fe4S bacterial-type ferredoxin family. RnfB subfamily. As to quaternary structure, the complex is composed of six subunits: RnfA, RnfB, RnfC, RnfD, RnfE and RnfG. [4Fe-4S] cluster is required as a cofactor.

It localises to the cell inner membrane. Functionally, part of a membrane-bound complex that couples electron transfer with translocation of ions across the membrane. The sequence is that of Ion-translocating oxidoreductase complex subunit B from Shewanella sp. (strain ANA-3).